A 316-amino-acid chain; its full sequence is Arginase-1 (316 aa).

The segment at 1-26 (MAKERHSVGVIGAPFSKGQPRRGVEE) is disordered. Histidine 101, aspartate 124, histidine 126, and aspartate 128 together coordinate Mn(2+). Residues 126–130 (HADIN), 137–139 (CGN), and aspartate 183 each bind substrate. Mn(2+)-binding residues include aspartate 232 and aspartate 234. Threonine 246 contacts substrate.

This sequence belongs to the arginase family. As to quaternary structure, homotrimer. The cofactor is Mn(2+). As to expression, strongest expression in liver.

The catalysed reaction is L-arginine + H2O = urea + L-ornithine. It participates in nitrogen metabolism; urea cycle; L-ornithine and urea from L-arginine: step 1/1. The protein is Arginase-1 (arg1) of Xenopus laevis (African clawed frog).